The chain runs to 152 residues: MLGLGHDVVDVPAFAKQLNEPGTRMRNLFSMREIWQTAQRSQLKHDDEAVHLAARWAGKEAFLKAWCAAISRHAKDGAEVAYPYTLDNFPWVRIEILDDSHGVPRVILSSEVQRKVQQSLGLPLDPVCQSYDISISISHDGPIASAVVMLEI.

The Mg(2+) site is built by D7 and E60.

This sequence belongs to the P-Pant transferase superfamily. AcpS family. Mg(2+) is required as a cofactor.

The protein resides in the cytoplasm. The catalysed reaction is apo-[ACP] + CoA = holo-[ACP] + adenosine 3',5'-bisphosphate + H(+). Functionally, transfers the 4'-phosphopantetheine moiety from coenzyme A to a Ser of acyl-carrier-protein. In Bifidobacterium adolescentis (strain ATCC 15703 / DSM 20083 / NCTC 11814 / E194a), this protein is Holo-[acyl-carrier-protein] synthase.